An 827-amino-acid polypeptide reads, in one-letter code: Periplasmic nitrate reductase (827 aa).

The tat-type signal signal peptide spans 1 to 32; it reads MNLSRRDFMKANAALAAASVAGLIIPVKNVNA. The region spanning 37–93 is the 4Fe-4S Mo/W bis-MGD-type domain; sequence ITWDKAVCRFCGTGCAVLVGTKDGRVVASQGDPDAEVNRGLNCIKGYFLPKIMYGKD. Residues Cys44, Cys47, Cys51, and Cys79 each contribute to the [4Fe-4S] cluster site. Mo-bis(molybdopterin guanine dinucleotide)-binding positions include Lys81, Gln148, Asn173, Cys177, 210–217, 242–246, 261–263, Met372, Gln376, Asn482, 508–509, Lys531, Asp558, and 717–726; these read WGSNMAEM, STFEH, QSD, SD, and TGRILEHWHT. Phe793 is a binding site for substrate. Mo-bis(molybdopterin guanine dinucleotide) is bound by residues Asn801 and Lys818.

The protein belongs to the prokaryotic molybdopterin-containing oxidoreductase family. NasA/NapA/NarB subfamily. Component of the periplasmic nitrate reductase NapAB complex composed of NapA and NapB. [4Fe-4S] cluster is required as a cofactor. The cofactor is Mo-bis(molybdopterin guanine dinucleotide). In terms of processing, predicted to be exported by the Tat system. The position of the signal peptide cleavage has not been experimentally proven.

The protein localises to the periplasm. The catalysed reaction is 2 Fe(II)-[cytochrome] + nitrate + 2 H(+) = 2 Fe(III)-[cytochrome] + nitrite + H2O. Functionally, catalytic subunit of the periplasmic nitrate reductase complex NapAB. Receives electrons from NapB and catalyzes the reduction of nitrate to nitrite. The polypeptide is Periplasmic nitrate reductase (Histophilus somni (strain 129Pt) (Haemophilus somnus)).